The sequence spans 448 residues: Antilisterial bacteriocin subtilosin biosynthesis protein AlbA (448 aa).

A Radical SAM core domain is found at 115–329; sequence FPMPLHATFE…EQHVIDEFKD (215 aa). 6 residues coordinate [4Fe-4S] cluster: C129, C133, C136, C408, C414, and C417.

[4Fe-4S] cluster is required as a cofactor.

It localises to the cytoplasm. Functionally, catalyzes the formation of 3 thioether bonds during production of the sactipeptide subtilosin from SboA. In vitro the thioether bonds cannot be made in the absence of the SboA propeptide, suggesting this is the first reaction in subtilosin maturation. In vitro, in the absence of a second substrate, cleaves S-adenosyl-L-methionine into Met and 5'-dA. The chain is Antilisterial bacteriocin subtilosin biosynthesis protein AlbA (albA) from Bacillus subtilis (strain 168).